A 578-amino-acid chain; its full sequence is Membrane protein insertase YidC (578 aa).

The helical transmembrane segment at 3–23 (IQRSILIVALAVVSYLLVLQW) threads the bilayer. Residues 34–71 (AASASMNTTQGLPDTPSAAGTSSDVPTAQSGAAGSEAA) form a disordered region. Positions 37–65 (ASMNTTQGLPDTPSAAGTSSDVPTAQSGA) are enriched in polar residues. The next 5 helical transmembrane spans lie at 361–381 (LELTVDYGFLWFIAQPIFWLL), 387–407 (LIGNWGWSIIALTVLIKLAFF), 457–477 (LGGCLPILVQMPVFLSLYWVL), 500–520 (PFFILPIVMGGTMLIQQMLNP), and 535–555 (PIIFTFFFLWFPAGLVLYWVV).

This sequence belongs to the OXA1/ALB3/YidC family. Type 1 subfamily. Interacts with the Sec translocase complex via SecD. Specifically interacts with transmembrane segments of nascent integral membrane proteins during membrane integration.

The protein localises to the cell inner membrane. Functionally, required for the insertion and/or proper folding and/or complex formation of integral membrane proteins into the membrane. Involved in integration of membrane proteins that insert both dependently and independently of the Sec translocase complex, as well as at least some lipoproteins. Aids folding of multispanning membrane proteins. The chain is Membrane protein insertase YidC from Pseudomonas paraeruginosa (strain DSM 24068 / PA7) (Pseudomonas aeruginosa (strain PA7)).